The primary structure comprises 1071 residues: Intracellular phospholipase A2 (1071 aa).

Positions 1–22 are disordered; sequence MTTTNKDGPFRQQYLPGVHKEP. 7 ANK repeats span residues 411–440, 479–508, 510–539, 544–570, 578–610, 614–651, and 652–681; these read ENCY…TLFC, DGQS…KFTR, DRNE…EIAN, LGNS…ELGL, AGET…NMNA, HGNT…KINL, and RGES…TRCP. A PNPLA domain is found at 748–921; it reads ISMDGGGIRG…ISNNPALDLM (174 aa). The GXGXXG motif lies at 752 to 757; it reads GGGIRG. The GXSXG signature appears at 784-788; that stretch reads GTSTG. The active-site Nucleophile is Ser-786. The Proton acceptor role is filled by Asp-908. Positions 908–910 match the DGA/G motif; sequence DGG.

The protein belongs to the patatin family.

It catalyses the reaction a 1,2-diacyl-sn-glycero-3-phosphocholine + H2O = a 1-acyl-sn-glycero-3-phosphocholine + a fatty acid + H(+). Functionally, phospholipase that plays a critical role during oogenesis, ovulation, and/or embryogenesis. The sequence is that of Intracellular phospholipase A2 from Caenorhabditis elegans.